Reading from the N-terminus, the 350-residue chain is Protein MGF 360-12L (350 aa).

One copy of the ANK repeat lies at 57–89; it reads DLNTALVKAVRENNYNLIKLFAEWGANINYGLV.

The protein belongs to the asfivirus MGF 360 family.

Functionally, plays a role in virus cell tropism, and may be required for efficient virus replication in macrophages. The sequence is that of Protein MGF 360-12L from African swine fever virus (isolate Warthog/Namibia/Wart80/1980) (ASFV).